We begin with the raw amino-acid sequence, 279 residues long: NADPH-dependent 7-cyano-7-deazaguanine reductase (279 aa).

Residue 86–88 coordinates substrate; that stretch reads IES. 88–89 is a binding site for NADPH; the sequence is SK. Cys-187 acts as the Thioimide intermediate in catalysis. The active-site Proton donor is the Asp-194. 226–227 is a substrate binding site; it reads HE. 255-256 is an NADPH binding site; the sequence is RG.

This sequence belongs to the GTP cyclohydrolase I family. QueF type 2 subfamily. In terms of assembly, homodimer.

It is found in the cytoplasm. The catalysed reaction is 7-aminomethyl-7-carbaguanine + 2 NADP(+) = 7-cyano-7-deazaguanine + 2 NADPH + 3 H(+). It functions in the pathway tRNA modification; tRNA-queuosine biosynthesis. Catalyzes the NADPH-dependent reduction of 7-cyano-7-deazaguanine (preQ0) to 7-aminomethyl-7-deazaguanine (preQ1). The sequence is that of NADPH-dependent 7-cyano-7-deazaguanine reductase from Haemophilus ducreyi (strain 35000HP / ATCC 700724).